The sequence spans 352 residues: tRNA pseudouridine synthase D (352 aa).

Asp81 serves as the catalytic Nucleophile. One can recognise a TRUD domain in the interval 157–303 (GIPNYFGVQR…MEHERRILRL (147 aa)).

The protein belongs to the pseudouridine synthase TruD family.

The enzyme catalyses uridine(13) in tRNA = pseudouridine(13) in tRNA. Functionally, responsible for synthesis of pseudouridine from uracil-13 in transfer RNAs. The sequence is that of tRNA pseudouridine synthase D from Pseudomonas syringae pv. tomato (strain ATCC BAA-871 / DC3000).